Here is a 208-residue protein sequence, read N- to C-terminus: Protein-L-isoaspartate O-methyltransferase (208 aa).

Serine 59 is an active-site residue.

Belongs to the methyltransferase superfamily. L-isoaspartyl/D-aspartyl protein methyltransferase family.

The protein localises to the cytoplasm. The catalysed reaction is [protein]-L-isoaspartate + S-adenosyl-L-methionine = [protein]-L-isoaspartate alpha-methyl ester + S-adenosyl-L-homocysteine. In terms of biological role, catalyzes the methyl esterification of L-isoaspartyl residues in peptides and proteins that result from spontaneous decomposition of normal L-aspartyl and L-asparaginyl residues. It plays a role in the repair and/or degradation of damaged proteins. The chain is Protein-L-isoaspartate O-methyltransferase from Salmonella arizonae (strain ATCC BAA-731 / CDC346-86 / RSK2980).